Here is a 181-residue protein sequence, read N- to C-terminus: Mytilin-1 (181 aa).

The N-terminal stretch at 1–22 is a signal peptide; sequence MISKYCLFVIVLGTTGTALVLT.

As to expression, component of the organic matrix of calcified shell layers like nacre and prisms.

It localises to the secreted. This Mytilus galloprovincialis (Mediterranean mussel) protein is Mytilin-1.